Consider the following 144-residue polypeptide: ATP synthase epsilon chain (144 aa).

This sequence belongs to the ATPase epsilon chain family. As to quaternary structure, F-type ATPases have 2 components, CF(1) - the catalytic core - and CF(0) - the membrane proton channel. CF(1) has five subunits: alpha(3), beta(3), gamma(1), delta(1), epsilon(1). CF(0) has three main subunits: a, b and c.

Its subcellular location is the cell inner membrane. Produces ATP from ADP in the presence of a proton gradient across the membrane. This is ATP synthase epsilon chain from Hydrogenovibrio crunogenus (strain DSM 25203 / XCL-2) (Thiomicrospira crunogena).